Here is a 359-residue protein sequence, read N- to C-terminus: Alanine racemase (359 aa).

The active-site Proton acceptor; specific for D-alanine is Lys34. Lys34 is modified (N6-(pyridoxal phosphate)lysine). Position 129 (Arg129) interacts with substrate. The active-site Proton acceptor; specific for L-alanine is the Tyr256. Substrate is bound at residue Met304.

Belongs to the alanine racemase family. It depends on pyridoxal 5'-phosphate as a cofactor.

It carries out the reaction L-alanine = D-alanine. It functions in the pathway amino-acid biosynthesis; D-alanine biosynthesis; D-alanine from L-alanine: step 1/1. Functionally, catalyzes the interconversion of L-alanine and D-alanine. May also act on other amino acids. In Photobacterium profundum (strain SS9), this protein is Alanine racemase (alr).